Reading from the N-terminus, the 386-residue chain is Patatin-14 (386 aa).

Residues 1–23 (MATTKSFLILFFMILATTSSTCA) form the signal peptide. Residues 32–229 (LSIDGGGIKG…TVGDPALLSL (198 aa)) form the PNPLA domain. The GXGXXG signature appears at 36-41 (GGGIKG). Positions 75–79 (GTSTG) match the GXSXG motif. The Nucleophile role is filled by Ser77. N-linked (GlcNAc...) asparagine glycosylation occurs at Asn115. The Proton acceptor role is filled by Asp215. Residues 215 to 217 (DGG) carry the DGA/G motif. A coiled-coil region spans residues 321–381 (ENALTGTTTE…LLSDRKKLRA (61 aa)).

Belongs to the patatin family. In terms of tissue distribution, tuber.

It localises to the vacuole. Its function is as follows. Probable lipolytic acyl hydrolase (LAH), an activity which is thought to be involved in the response of tubers to pathogens. This is Patatin-14 from Solanum tuberosum (Potato).